The chain runs to 669 residues: DNA ligase (669 aa).

Residues 34–38 (DAEYD), 83–84 (SL), and glutamate 114 each bind NAD(+). The N6-AMP-lysine intermediate role is filled by lysine 116. Positions 137, 171, 287, and 311 each coordinate NAD(+). Residues cysteine 405, cysteine 408, cysteine 423, and cysteine 428 each coordinate Zn(2+). Residues 591-669 (NVESYFAGKT…EERFLQELNK (79 aa)) form the BRCT domain.

Belongs to the NAD-dependent DNA ligase family. LigA subfamily. It depends on Mg(2+) as a cofactor. Mn(2+) is required as a cofactor.

The enzyme catalyses NAD(+) + (deoxyribonucleotide)n-3'-hydroxyl + 5'-phospho-(deoxyribonucleotide)m = (deoxyribonucleotide)n+m + AMP + beta-nicotinamide D-nucleotide.. Functionally, DNA ligase that catalyzes the formation of phosphodiester linkages between 5'-phosphoryl and 3'-hydroxyl groups in double-stranded DNA using NAD as a coenzyme and as the energy source for the reaction. It is essential for DNA replication and repair of damaged DNA. This Bacillus cereus (strain G9842) protein is DNA ligase.